Here is a 242-residue protein sequence, read N- to C-terminus: Outer membrane protein class 4 (242 aa).

The N-terminal stretch at 1–22 (MTKQLKLSALFVALLASGTAVA) is a signal peptide. Tandem repeats lie at residues 69-70 (AP), 71-72 (EP), 73-74 (EP), 75-76 (EP), 77-78 (EP), 79-80 (AP), and 81-82 (AP). Positions 69-82 (APEPEPEPEPAPAP) are 7 X 2 AA tandem repeats of X-P. One can recognise an OmpA-like domain in the interval 92-229 (YVDETISLSA…RVDVKIRSIV (138 aa)). An intrachain disulfide couples Cys191 to Cys214.

Belongs to the outer membrane OOP (TC 1.B.6) superfamily.

The protein localises to the cell outer membrane. The chain is Outer membrane protein class 4 (rmpM) from Neisseria meningitidis serogroup A / serotype 4A (strain DSM 15465 / Z2491).